The primary structure comprises 320 residues: Homoserine kinase (320 aa).

Residue P100 to A110 coordinates ATP.

It belongs to the GHMP kinase family. Homoserine kinase subfamily.

Its subcellular location is the cytoplasm. The enzyme catalyses L-homoserine + ATP = O-phospho-L-homoserine + ADP + H(+). The protein operates within amino-acid biosynthesis; L-threonine biosynthesis; L-threonine from L-aspartate: step 4/5. Functionally, catalyzes the ATP-dependent phosphorylation of L-homoserine to L-homoserine phosphate. This Chlorobium phaeobacteroides (strain DSM 266 / SMG 266 / 2430) protein is Homoserine kinase.